Here is a 430-residue protein sequence, read N- to C-terminus: Aspartate aminotransferase, mitochondrial (430 aa).

A mitochondrion-targeting transit peptide spans 1 to 29 (MALLHSARVLSGVASAFHPGLAAAASARA). The residue at position 48 (Thr-48) is a Phosphothreonine. An N6-acetyllysine modification is found at Lys-59. Gly-65 serves as a coordination point for substrate. Lys-73 carries the N6-acetyllysine; alternate modification. The residue at position 73 (Lys-73) is an N6-succinyllysine; alternate. The residue at position 82 (Lys-82) is an N6-acetyllysine. At Lys-90 the chain carries N6-acetyllysine; alternate. Lys-90 carries the N6-succinyllysine; alternate modification. Position 96 is a 3'-nitrotyrosine; alternate (Tyr-96). Tyr-96 bears the Phosphotyrosine; alternate mark. Residue Lys-122 is modified to N6-acetyllysine; alternate. Lys-122 carries the post-translational modification N6-succinyllysine; alternate. Phosphoserine is present on Ser-143. Residue Lys-159 is modified to N6-acetyllysine; alternate. Lys-159 is subject to N6-succinyllysine; alternate. Trp-162 is a binding site for substrate. Lys-185 carries the N6-acetyllysine; alternate modification. Position 185 is an N6-succinyllysine; alternate (Lys-185). Asn-215 lines the substrate pocket. Lys-227 is subject to N6-succinyllysine. An N6-acetyllysine modification is found at Lys-234. Residues Lys-279 and Lys-296 each carry the N6-acetyllysine; alternate modification. An N6-(pyridoxal phosphate)lysine; alternate modification is found at Lys-279. Position 296 is an N6-succinyllysine; alternate (Lys-296). Lys-302 is subject to N6-acetyllysine. At Lys-309 the chain carries N6-acetyllysine; alternate. Residue Lys-309 is modified to N6-succinyllysine; alternate. Asymmetric dimethylarginine is present on Arg-313. Lys-338 carries the N6-acetyllysine; alternate modification. Lys-338 carries the post-translational modification N6-succinyllysine; alternate. Lys-345 bears the N6-acetyllysine mark. Position 363 is an N6-acetyllysine; alternate (Lys-363). At Lys-363 the chain carries N6-succinyllysine; alternate. An N6-acetyllysine mark is found at Lys-364 and Lys-387. Residues Lys-396 and Lys-404 each carry the N6-acetyllysine; alternate modification. Residues Lys-396 and Lys-404 each carry the N6-succinyllysine; alternate modification. Substrate is bound at residue Arg-407.

This sequence belongs to the class-I pyridoxal-phosphate-dependent aminotransferase family. As to quaternary structure, homodimer. Requires pyridoxal 5'-phosphate as cofactor.

It localises to the mitochondrion matrix. Its subcellular location is the cell membrane. It carries out the reaction L-aspartate + 2-oxoglutarate = oxaloacetate + L-glutamate. The enzyme catalyses L-kynurenine + 2-oxoglutarate = kynurenate + L-glutamate + H2O. In terms of biological role, catalyzes the irreversible transamination of the L-tryptophan metabolite L-kynurenine to form kynurenic acid (KA). As a member of the malate-aspartate shuttle, it has a key role in the intracellular NAD(H) redox balance. Is important for metabolite exchange between mitochondria and cytosol, and for amino acid metabolism. Facilitates cellular uptake of long-chain free fatty acids. This chain is Aspartate aminotransferase, mitochondrial (GOT2), found in Oryctolagus cuniculus (Rabbit).